We begin with the raw amino-acid sequence, 341 residues long: Cell division protein ZipA (341 aa).

The Periplasmic segment spans residues 1–6 (MENLQL). Residues 7-27 (VLFVLGAIAIVAVLVHGFWSI) traverse the membrane as a helical segment. Topologically, residues 28–341 (RKQQPKSLKE…YLQRIRTQNS (314 aa)) are cytoplasmic. 2 disordered regions span residues 35–134 (LKES…PVLS) and 157–201 (QSSL…PEPE). Residues 90–100 (TLTSEGQMDSS) show a composition bias toward polar residues. Positions 175–190 (SIEVPEPVSEPVLESV) are enriched in low complexity. Positions 192–201 (EPEPVAPEPE) are enriched in pro residues.

It belongs to the ZipA family. As to quaternary structure, interacts with FtsZ via their C-terminal domains.

The protein resides in the cell inner membrane. Functionally, essential cell division protein that stabilizes the FtsZ protofilaments by cross-linking them and that serves as a cytoplasmic membrane anchor for the Z ring. Also required for the recruitment to the septal ring of downstream cell division proteins. The sequence is that of Cell division protein ZipA from Shewanella sediminis (strain HAW-EB3).